A 505-amino-acid chain; its full sequence is 2,3-bisphosphoglycerate-independent phosphoglycerate mutase (505 aa).

Mn(2+) contacts are provided by D12 and S62. The Phosphoserine intermediate role is filled by S62. Residues H123, 153 to 154, R185, R191, 257 to 260, and K330 each bind substrate; these read RD and RPDR. 5 residues coordinate Mn(2+): D397, H401, D438, H439, and H456.

Belongs to the BPG-independent phosphoglycerate mutase family. As to quaternary structure, monomer. The cofactor is Mn(2+).

The enzyme catalyses (2R)-2-phosphoglycerate = (2R)-3-phosphoglycerate. The protein operates within carbohydrate degradation; glycolysis; pyruvate from D-glyceraldehyde 3-phosphate: step 3/5. Its function is as follows. Catalyzes the interconversion of 2-phosphoglycerate and 3-phosphoglycerate. The protein is 2,3-bisphosphoglycerate-independent phosphoglycerate mutase of Staphylococcus haemolyticus (strain JCSC1435).